Consider the following 83-residue polypeptide: Exodeoxyribonuclease 7 small subunit (83 aa).

Belongs to the XseB family. Heterooligomer composed of large and small subunits.

Its subcellular location is the cytoplasm. The catalysed reaction is Exonucleolytic cleavage in either 5'- to 3'- or 3'- to 5'-direction to yield nucleoside 5'-phosphates.. In terms of biological role, bidirectionally degrades single-stranded DNA into large acid-insoluble oligonucleotides, which are then degraded further into small acid-soluble oligonucleotides. The sequence is that of Exodeoxyribonuclease 7 small subunit from Afipia carboxidovorans (strain ATCC 49405 / DSM 1227 / KCTC 32145 / OM5) (Oligotropha carboxidovorans).